Consider the following 74-residue polypeptide: Putative membrane protein insertion efficiency factor (74 aa).

Belongs to the UPF0161 family.

The protein localises to the cell inner membrane. Functionally, could be involved in insertion of integral membrane proteins into the membrane. The protein is Putative membrane protein insertion efficiency factor of Leptospira interrogans serogroup Icterohaemorrhagiae serovar copenhageni (strain Fiocruz L1-130).